The sequence spans 308 residues: MTNLQERGHLLTELVNPNSLNLDQLSSLELVELFNSEDQKAVAAVAAAKVQLAEAIDSTAERLRHGGRLFYIGAGTSGRLGVLDAAECPPTFCTPPELVQGIIAGGAGALVRSSEDLEDSIEDGEAAIAGRHITQLDVVVGITAGGTTPYVHGAIHAARQRGASTIFIACVPAEQVSIDADIDIRLLTGPEIIAGSTRLKAGTVTKLALNMLSTGVMVKLGKVYGNRMVDVAVTNQKLRDRALRILQDLTGLSREAAGFLLERSGKWVKLALLMHWTGLEKDDGDRLLSEHQSNLRAAVMSYQNHNQS.

In terms of domain architecture, SIS spans 59-222 (TAERLRHGGR…STGVMVKLGK (164 aa)). Glu-87 serves as the catalytic Proton donor. Residue Glu-118 is part of the active site.

The protein belongs to the GCKR-like family. MurNAc-6-P etherase subfamily. Homodimer.

The catalysed reaction is N-acetyl-D-muramate 6-phosphate + H2O = N-acetyl-D-glucosamine 6-phosphate + (R)-lactate. It functions in the pathway amino-sugar metabolism; N-acetylmuramate degradation. Functionally, specifically catalyzes the cleavage of the D-lactyl ether substituent of MurNAc 6-phosphate, producing GlcNAc 6-phosphate and D-lactate. The polypeptide is N-acetylmuramic acid 6-phosphate etherase (Nostoc punctiforme (strain ATCC 29133 / PCC 73102)).